Here is a 175-residue protein sequence, read N- to C-terminus: D-glycero-beta-D-manno-heptose-1,7-bisphosphate 7-phosphatase (175 aa).

The active-site Nucleophile is the Asp-7. Residues Asp-7 and Asp-9 each coordinate Mg(2+). Substrate contacts are provided by residues 7–9 (DRD), 15–19 (DSDAY), and 50–53 (TNQS). The Proton donor role is filled by Asp-9. The Zn(2+) site is built by Cys-89, His-91, Cys-97, and Cys-99. 100–101 (RK) serves as a coordination point for substrate. Asp-126 contributes to the Mg(2+) binding site.

Belongs to the gmhB family. As to quaternary structure, monomer. It depends on Mg(2+) as a cofactor. Requires Zn(2+) as cofactor.

The protein resides in the cytoplasm. It catalyses the reaction D-glycero-beta-D-manno-heptose 1,7-bisphosphate + H2O = D-glycero-beta-D-manno-heptose 1-phosphate + phosphate. It participates in nucleotide-sugar biosynthesis; ADP-L-glycero-beta-D-manno-heptose biosynthesis; ADP-L-glycero-beta-D-manno-heptose from D-glycero-beta-D-manno-heptose 7-phosphate: step 2/4. The protein operates within bacterial outer membrane biogenesis; LPS core biosynthesis. Functionally, converts the D-glycero-beta-D-manno-heptose 1,7-bisphosphate (beta-HBP) intermediate into D-glycero-beta-D-manno-heptose 1-phosphate by removing the phosphate group at the C-7 position. The sequence is that of D-glycero-beta-D-manno-heptose-1,7-bisphosphate 7-phosphatase from Pseudomonas putida (strain ATCC 47054 / DSM 6125 / CFBP 8728 / NCIMB 11950 / KT2440).